A 1716-amino-acid polypeptide reads, in one-letter code: DNA-directed RNA polymerase I subunit RPA1 (1716 aa).

Zn(2+)-binding residues include cysteine 64, cysteine 67, cysteine 74, histidine 77, cysteine 104, and cysteine 107. The segment at 110-201 is clamp; that stretch reads LTCPRAAIHL…VAHFWKTHMA (92 aa). 2 residues coordinate Zn(2+): cysteine 205 and cysteine 208. The tract at residues 327–433 is clamp; sequence FTNGQTVNLQ…IRQILEKKEG (107 aa). A rudder region spans residues 410-423; that stretch reads DSDMDKLMLEKYPG. Residues lysine 431, arginine 436, and arginine 443 each coordinate DNA. Positions 475–549 are involved in RRN3 binding to Pol I complex; the sequence is YPQPVTPWNV…QGAKVVCRHV (75 aa). Arginine 559 provides a ligand contact to RNA. 3 residues coordinate Mg(2+): aspartate 595, aspartate 597, and aspartate 599. Aspartate 599 lines the RNA pocket. Residues 812 to 890 form a funnel region; sequence KPNADVMRQR…NEINKACMPF (79 aa). The bridging helix stretch occupies residues 967-1008; the sequence is RPPEFFFHCMAGREGLVDTAVKTSRSGYLQRCIIKHLEGLVI. The mediates the interaction with TOP2A stretch occupies residues 1067–1162; sequence ADPQKVLRHF…SLSVWRPDIH (96 aa). The segment at 1214–1255 is trigger loop; that stretch reads PGEAVGLLAAQSIGEPSTQMTLNTFHFAGRGEMNVTLGIPRL. Arginine 1256 contacts DNA. The tract at residues 1368-1493 is disordered; the sequence is ASAFRSVNTR…RHSRPQGAEA (126 aa). The segment covering 1380 to 1397 has biased composition (basic and acidic residues); that stretch reads TQKDLDDTEDSGRNRREE. 2 stretches are compositionally biased toward acidic residues: residues 1398–1419 and 1429–1451; these read ERDEEEEGNIVDAEAEEGDADA and EEEVDYESEEEGEEEEEEDVQEE. Basic and acidic residues predominate over residues 1452–1464; sequence ENIKGEGAHQTHE. The span at 1465 to 1477 shows a compositional bias: acidic residues; that stretch reads PDEEEGSGLEEES.

Belongs to the RNA polymerase beta' chain family. In terms of assembly, component of the RNA polymerase I (Pol I) complex consisting of 13 subunits: a ten-subunit catalytic core composed of POLR1A/RPA1, POLR1B/RPA2, POLR1C/RPAC1, POLR1D/RPAC2, POLR1H/RPA12, POLR2E/RPABC1, POLR2F/RPABC2, POLR2H/RPABC3, POLR2K/RPABC4 and POLR2L/RPABC5; a mobile stalk subunit POLR1F/RPA43 protruding from the core and additional subunits homologous to general transcription factors POLR1E/RPA49 and POLR1G/RPA34. Part of Pol I pre-initiation complex (PIC), in which Pol I core assembles with RRN3 and promoter-bound UTBF and SL1/TIF-IB complex. Interacts (via dock II domain) with TOP2A; this interaction may assist Pol I transcription initiation by releasing supercoils occurring during DNA unwinding. Interacts with CAVIN1; this interaction induces the dissociation of Pol I complex paused at rDNA terminator sequences. Interacts with MYO1C. Interacts with ERBB2. Interacts with DDX11. Interacts with RECQL5. Requires Mg(2+) as cofactor. Phosphorylated.

It localises to the nucleus. The protein resides in the nucleolus. Its subcellular location is the chromosome. It carries out the reaction RNA(n) + a ribonucleoside 5'-triphosphate = RNA(n+1) + diphosphate. Its function is as follows. Catalytic core component of RNA polymerase I (Pol I), a DNA-dependent RNA polymerase which synthesizes ribosomal RNA precursors using the four ribonucleoside triphosphates as substrates. Transcribes 47S pre-rRNAs from multicopy rRNA gene clusters, giving rise to 5.8S, 18S and 28S ribosomal RNAs. Pol I-mediated transcription cycle proceeds through transcription initiation, transcription elongation and transcription termination stages. During transcription initiation, Pol I pre-initiation complex (PIC) is recruited by the selectivity factor 1 (SL1/TIF-IB) complex bound to the core promoter that precedes an rDNA repeat unit. The PIC assembly bends the promoter favoring the formation of the transcription bubble and promoter escape. Once the polymerase has escaped from the promoter it enters the elongation phase during which RNA is actively polymerized, based on complementarity with the template DNA strand. Highly processive, assembles in structures referred to as 'Miller trees' where many elongating Pol I complexes queue and transcribe the same rDNA coding regions. At terminator sequences downstream of the rDNA gene, PTRF interacts with Pol I and halts Pol I transcription leading to the release of the RNA transcript and polymerase from the DNA. Forms Pol I active center together with the second largest subunit POLR1B/RPA2. Appends one nucleotide at a time to the 3' end of the nascent RNA, with POLR1A/RPA1 contributing a Mg(2+)-coordinating DxDGD motif, and POLR1B/RPA2 participating in the coordination of a second Mg(2+) ion and providing lysine residues believed to facilitate Watson-Crick base pairing between the incoming nucleotide and the template base. Typically, Mg(2+) ions direct a 5' nucleoside triphosphate to form a phosphodiester bond with the 3' hydroxyl of the preceding nucleotide of the nascent RNA, with the elimination of pyrophosphate. Has proofreading activity: Pauses and backtracks to allow the cleavage of a missincorporated nucleotide via POLR1H/RPA12. High Pol I processivity is associated with decreased transcription fidelity. This is DNA-directed RNA polymerase I subunit RPA1 from Rattus norvegicus (Rat).